The chain runs to 196 residues: Large ribosomal subunit protein bL9 (196 aa).

The tract at residues 172–196 (NESARPEAFFDPEAEIEQEEGEENA) is disordered. Positions 181-196 (FDPEAEIEQEEGEENA) are enriched in acidic residues.

This sequence belongs to the bacterial ribosomal protein bL9 family.

In terms of biological role, binds to the 23S rRNA. The protein is Large ribosomal subunit protein bL9 of Chelativorans sp. (strain BNC1).